A 120-amino-acid polypeptide reads, in one-letter code: Ribonuclease P protein component (120 aa).

The protein belongs to the RnpA family. In terms of assembly, consists of a catalytic RNA component (M1 or rnpB) and a protein subunit.

The catalysed reaction is Endonucleolytic cleavage of RNA, removing 5'-extranucleotides from tRNA precursor.. Its function is as follows. RNaseP catalyzes the removal of the 5'-leader sequence from pre-tRNA to produce the mature 5'-terminus. It can also cleave other RNA substrates such as 4.5S RNA. The protein component plays an auxiliary but essential role in vivo by binding to the 5'-leader sequence and broadening the substrate specificity of the ribozyme. This is Ribonuclease P protein component from Acidothermus cellulolyticus (strain ATCC 43068 / DSM 8971 / 11B).